The chain runs to 565 residues: NAD-dependent malic enzyme (565 aa).

Tyr-104 (proton donor) is an active-site residue. Arg-157 lines the NAD(+) pocket. Residue Lys-175 is the Proton acceptor of the active site. Positions 246, 247, and 270 each coordinate a divalent metal cation. NAD(+) contacts are provided by Asp-270 and Asn-418.

The protein belongs to the malic enzymes family. In terms of assembly, homotetramer. It depends on Mg(2+) as a cofactor. Mn(2+) serves as cofactor.

The enzyme catalyses (S)-malate + NAD(+) = pyruvate + CO2 + NADH. The catalysed reaction is oxaloacetate + H(+) = pyruvate + CO2. The polypeptide is NAD-dependent malic enzyme (Escherichia coli (strain SMS-3-5 / SECEC)).